The chain runs to 275 residues: Alpha carbonic anhydrase 7 (275 aa).

The first 27 residues, 1–27, serve as a signal peptide directing secretion; the sequence is MVNYSSISCIFFVALFSIFTIVSISSA. Asparagine 3 and asparagine 96 each carry an N-linked (GlcNAc...) asparagine glycan. One can recognise an Alpha-carbonic anhydrase domain in the interval 38-272; that stretch reads REFNYKKNDE…TNKRIVHLYR (235 aa). Cysteine 63 and cysteine 222 are disulfide-bonded. Histidine 104 acts as the Proton acceptor in catalysis. Histidine 130, histidine 132, and histidine 149 together coordinate Zn(2+). 218–219 serves as a coordination point for substrate; the sequence is TT. A glycan (N-linked (GlcNAc...) asparagine) is linked at asparagine 225.

Belongs to the alpha-class carbonic anhydrase family. Zn(2+) serves as cofactor. Post-translationally, N-glycosylated.

The protein resides in the plastid. It localises to the chloroplast stroma. It carries out the reaction hydrogencarbonate + H(+) = CO2 + H2O. Reversible hydration of carbon dioxide. This chain is Alpha carbonic anhydrase 7 (ACA7), found in Arabidopsis thaliana (Mouse-ear cress).